The following is a 612-amino-acid chain: MRLKSFSTTLDTLRRRFNDSSSEEDKLEKNIQDETSIKEVSLQDAKQSDEKGVEEKVFNDESFSIDVAPKPEDELSGIVKARYLTEHSSRISFYICYFSIFLLFFAISFQAECYYSLTAYATSAFAGHSLLSTIAVANNIISAAIKPPLARLSDVFGRLEAFLFSLLLYLVGLILMAASTNVQTYAGGSVLYNAGYTGVELIMTIFMADTSSMANRSLVLGISYLPFVVTIWIGPRVAQEFYMHSTWRWGIAVWTILIPACSIPFLAVYSYYQFRAWREGALKGTLTINPVELFKKLDIIGLILMTAGLALVLLSISLASYDTGKWSDAKFIVMIIIGGLCLIAFVLYEIFVASFPALPFRLMREPTIGACCAMSFLFYITFYCWDNYYYSFLQVVHYTSITAAGYISYTYSFTSCATGFFLGILIRLTKRYKWYFVASIPVYILGQGLMIRYRGEQYNWGYQIMPQIIVGIGGGVIANLLTVAVQTVVSTENFAIVTALVSTVTPIGGAVGSAISGAIWNSVMPKRLEKNLPSDLKDQAYTIFESLTVQLSYTRGTDARNAIILSYSEVQKILTSVATGFAGAMIFPVWFVANPRLSTVKTHIFDSKESKV.

5 positions are modified to phosphoserine: serine 5, serine 21, serine 22, serine 36, and serine 41. 14 consecutive transmembrane segments (helical) span residues 91–111 (ISFY…SFQA), 125–145 (FAGH…SAAI), 159–179 (LEAF…MAAS), 188–208 (GSVL…IFMA), 218–238 (LVLG…PRVA), 249–269 (WGIA…LAVY), 299–319 (IIGL…ISLA), 331–351 (FIVM…YEIF), 365–385 (EPTI…FYCW), 406–426 (YISY…GILI), 434–453 (WYFV…MIRY), 464–484 (IMPQ…LTVA), 495–515 (AIVT…GSAI), and 573–593 (ILTS…WFVA).

The protein belongs to the major facilitator superfamily.

The protein resides in the membrane. Involved in the transport of siderophore iron and so has a role in iron homeostasis. The protein is Siderophore iron transporter 1 (str1) of Schizosaccharomyces pombe (strain 972 / ATCC 24843) (Fission yeast).